We begin with the raw amino-acid sequence, 360 residues long: DNA replication and repair protein RecF (360 aa).

30-37 (GHNGSGKT) serves as a coordination point for ATP.

Belongs to the RecF family.

It is found in the cytoplasm. The RecF protein is involved in DNA metabolism; it is required for DNA replication and normal SOS inducibility. RecF binds preferentially to single-stranded, linear DNA. It also seems to bind ATP. This is DNA replication and repair protein RecF from Shewanella denitrificans (strain OS217 / ATCC BAA-1090 / DSM 15013).